A 356-amino-acid polypeptide reads, in one-letter code: sn-glycerol-3-phosphate import ATP-binding protein UgpC (356 aa).

Residues 4 to 235 (LKLQAVTKSW…PASLFVASFI (232 aa)) form the ABC transporter domain. 37–44 (GPSGCGKS) is an ATP binding site.

This sequence belongs to the ABC transporter superfamily. sn-glycerol-3-phosphate importer (TC 3.A.1.1.3) family. The complex is composed of two ATP-binding proteins (UgpC), two transmembrane proteins (UgpA and UgpE) and a solute-binding protein (UgpB).

The protein resides in the cell inner membrane. It catalyses the reaction sn-glycerol 3-phosphate(out) + ATP + H2O = sn-glycerol 3-phosphate(in) + ADP + phosphate + H(+). In terms of biological role, part of the ABC transporter complex UgpBAEC involved in sn-glycerol-3-phosphate (G3P) import. Responsible for energy coupling to the transport system. The chain is sn-glycerol-3-phosphate import ATP-binding protein UgpC from Escherichia coli O157:H7.